Reading from the N-terminus, the 825-residue chain is Breast cancer anti-estrogen resistance protein 3 (825 aa).

Alanine 2 carries the N-acetylalanine modification. 3 positions are modified to phosphoserine: serine 32, serine 78, and serine 83. Residues 40 to 106 (DAYQDVSIHG…DRHGETFTFR (67 aa)) form a disordered region. Over residues 79–94 (PRQNSPVTQDGIQESP) the composition is skewed to polar residues. Basic and acidic residues predominate over residues 95 to 106 (WQDRHGETFTFR). An SH2 domain is found at 154–253 (WYHGRIPRQV…QSGAIIFQPI (100 aa)). Serine 182 and serine 290 each carry phosphoserine. Lysine 334 carries the N6-methyllysine modification. A phosphoserine mark is found at serine 358, serine 363, and serine 375. Residue arginine 442 is modified to Omega-N-methylarginine. Serine 471 is subject to Phosphoserine. The 271-residue stretch at 548–818 (DPKVIAQHVL…TALSRKLEPP (271 aa)) folds into the Ras-GEF domain. Positions 744–748 (LATAR) are mediates the interaction with BCAR1/p130CAS.

In terms of assembly, part of a complex comprised of PTPRA, BCAR1, BCAR3 (via SH2 domain) and SRC; the formation of the complex is dependent on integrin mediated-tyrosine phosphorylation of PTPRA. Within the complex, interacts (via SH2 domain) with PTPRA (when phosphorylated on 'Tyr-798'). Interacts (via Ras-GEF domain) with BCAR1. Interacts (via Ras-GEF domain) with NEDD9. Interacts with PTK2/FAK1. Interacts with PTPN1. Interacts (via SH2 domain) with EGFR (when tyrosine-phosphorylated). Post-translationally, phosphorylated on tyrosine residues. Ubiquitously expressed. Found in several cancer cell lines, but not in nonmalignant breast tissue.

Its subcellular location is the cytoplasm. It is found in the cell junction. The protein resides in the focal adhesion. In terms of biological role, acts as an adapter protein downstream of several growth factor receptors to promote cell proliferation, migration, and redistribution of actin fibers. Specifically involved in INS/insulin signaling pathway by mediating MAPK1/ERK2-MAPK3/ERK1 activation and DNA synthesis. Promotes insulin-mediated membrane ruffling. In response to vasoconstrictor peptide EDN1, involved in the activation of RAP1 downstream of PTK2B via interaction with phosphorylated BCAR1. Inhibits cell migration and invasion via regulation of TGFB-mediated matrix digestion, actin filament rearrangement, and inhibition of invadopodia activity. May inhibit TGFB-SMAD signaling, via facilitating BCAR1 and SMAD2 and/or SMAD3 interaction. Regulates EGF-induced DNA synthesis. Required for the maintenance of ocular lens morphology and structural integrity, potentially via regulation of focal adhesion complex signaling. Acts upstream of PTPRA to regulate the localization of BCAR1 and PTPRA to focal adhesions, via regulation of SRC-mediated phosphorylation of PTPRA. Positively regulates integrin-induced tyrosine phosphorylation of BCAR1. Acts as a guanine nucleotide exchange factor (GEF) for small GTPases RALA, RAP1A and RRAS. However, in a contrasting study, lacks GEF activity towards RAP1. In Homo sapiens (Human), this protein is Breast cancer anti-estrogen resistance protein 3 (BCAR3).